The sequence spans 260 residues: Proteasome subunit alpha (260 aa).

This sequence belongs to the peptidase T1A family. The 20S proteasome core is composed of 14 alpha and 14 beta subunits that assemble into four stacked heptameric rings, resulting in a barrel-shaped structure. The two inner rings, each composed of seven catalytic beta subunits, are sandwiched by two outer rings, each composed of seven alpha subunits. The catalytic chamber with the active sites is on the inside of the barrel. Has a gated structure, the ends of the cylinder being occluded by the N-termini of the alpha-subunits. Is capped at one or both ends by the proteasome regulatory ATPase, PAN.

The protein localises to the cytoplasm. The formation of the proteasomal ATPase PAN-20S proteasome complex, via the docking of the C-termini of PAN into the intersubunit pockets in the alpha-rings, triggers opening of the gate for substrate entry. Interconversion between the open-gate and close-gate conformations leads to a dynamic regulation of the 20S proteasome proteolysis activity. In terms of biological role, component of the proteasome core, a large protease complex with broad specificity involved in protein degradation. In Thermococcus kodakarensis (strain ATCC BAA-918 / JCM 12380 / KOD1) (Pyrococcus kodakaraensis (strain KOD1)), this protein is Proteasome subunit alpha.